Consider the following 47-residue polypeptide: Delta-ctenitoxin-Pr2d (47 aa).

5 disulfides stabilise this stretch: Cys3–Cys17, Cys10–Cys23, Cys14–Cys46, Cys16–Cys31, and Cys25–Cys29.

Expressed by the venom gland.

It localises to the secreted. Blocks voltage-gated sodium channels (Nav). Causes rapid general spastic paralysis and death when injected in mice at dose levels of less than 2 ug per mouse. The protein is Delta-ctenitoxin-Pr2d of Phoneutria reidyi (Brazilian Amazonian armed spider).